Reading from the N-terminus, the 98-residue chain is Cell division topological specificity factor (98 aa).

It belongs to the MinE family.

Its function is as follows. Prevents the cell division inhibition by proteins MinC and MinD at internal division sites while permitting inhibition at polar sites. This ensures cell division at the proper site by restricting the formation of a division septum at the midpoint of the long axis of the cell. The polypeptide is Cell division topological specificity factor (Nitrosomonas eutropha (strain DSM 101675 / C91 / Nm57)).